The sequence spans 728 residues: Meiotic sister-chromatid recombination protein 3 (728 aa).

7 disordered regions span residues 33-171 (QLSA…GRTQ), 236-261 (NETD…LNVE), 300-335 (PTHQ…EAEA), 363-403 (SDNA…VKSN), 422-454 (SAPH…ANTG), 495-514 (VGVS…QHYL), and 561-728 (YGYQ…KSSR). The span at 35–46 (SAAAASAASAAS) shows a compositional bias: low complexity. Residues 48–58 (DRTNYSRSHSL) are compositionally biased toward polar residues. Residues serine 57 and serine 64 each carry the phosphoserine modification. Low complexity predominate over residues 80-93 (STSSAAPPTSRAAA). 3 stretches are compositionally biased toward polar residues: residues 95–106 (QYSQKTYSLRSQ), 118–132 (YTTN…TSGA), and 140–171 (KNKS…GRTQ). Phosphoserine is present on residues serine 127, serine 151, and serine 155. The segment covering 251–261 (HLQDDSELNVE) has biased composition (basic and acidic residues). A compositionally biased stretch (basic residues) spans 309–326 (IHNKRKQASTTRRKKRPP). Position 363 is a phosphoserine (serine 363). Composition is skewed to polar residues over residues 363–373 (SDNASAPLGSN) and 385–403 (TLRS…VKSN). The span at 590–634 (EGVTTAKPSSNEGVMTNPVVTDSPSPLQQQIDSTTASSNGQSQGN) shows a compositional bias: polar residues. Positions 635-646 (VPTSAVASTTRT) are enriched in low complexity. At threonine 646 the chain carries Phosphothreonine. 3 stretches are compositionally biased toward polar residues: residues 654–668 (NLKS…QTPQ), 675–684 (DPTTSSTNEL), and 691–708 (MVTS…TQDP). Serine 660 is subject to Phosphoserine. Residues 711 to 728 (KHKKSSFFTKLFKKKSSR) show a composition bias toward basic residues.

It is found in the cell membrane. Functionally, may be involved in the control of meiotic sister-chromatid recombination. The polypeptide is Meiotic sister-chromatid recombination protein 3 (MSC3) (Saccharomyces cerevisiae (strain ATCC 204508 / S288c) (Baker's yeast)).